Reading from the N-terminus, the 419-residue chain is Tetraspanning orphan receptor (419 aa).

Over 1–28 (MPRAPALLTNDARHQFTCCLCLHVRTGT) the chain is Cytoplasmic. Residues 29-49 (IIFGITQIIIQLVFISFLFLM) traverse the membrane as a helical segment. At 50 to 165 (TFNPRLIPED…EVKIKHFSPY (116 aa)) the chain is on the extracellular side. The chain crosses the membrane as a helical span at residues 166–186 (IAVCVTTFSLAFCCFMVHGAI). Residues 187 to 193 (TKQPTHL) are Cytoplasmic-facing. Residues 194–214 (LPFFFIQVFDLIICLIHILGF) form a helical membrane-spanning segment. Residues 215-240 (MSSTSDLRLMIHTKTGPIYIKSTGFT) lie on the Extracellular side of the membrane. Residues 241–261 (FIILSISCMMLAFKAYCLGMV) traverse the membrane as a helical segment. Topologically, residues 262–419 (WDCYKYLMLN…SAPSNAHSSC (158 aa)) are cytoplasmic. Low complexity predominate over residues 303–316 (NNSIGNSGSPNEPN). The disordered stretch occupies residues 303–328 (NNSIGNSGSPNEPNTRPRPEPITYDP).

As to quaternary structure, interacts (via N-terminal extracellular domain) with human C2a. In terms of processing, phosphorylated on tyrosine residues.

The protein localises to the cell membrane. In terms of biological role, cell surface receptor that binds to human complement C2a protein. This results in inhibition of the classical and lectin pathways of complement activation, probably due to interference with binding of C2a to C4b and interference with cleavage by C1 or MASP2 such that C3 convertase cannot be formed. This infers resistance to complement-mediated cell lysis, allowing parasite survival and infection. This Schistosoma mansoni (Blood fluke) protein is Tetraspanning orphan receptor.